The primary structure comprises 82 residues: MNRLMILVFAAVILALASADEDVDITKRGVPCLCVSDGPRPRGNNLSGIMWMKTGGYGGNGCPKGWHFCGKSRGFFSDCCKR.

The N-terminal stretch at 1-19 (MNRLMILVFAAVILALASA) is a signal peptide. Positions 20–26 (DEDVDIT) are excised as a propeptide. Cystine bridges form between C32–C79, C34–C69, and C62–C80.

It belongs to the sea anemone sodium channel inhibitory toxin family. Type I subfamily.

It localises to the secreted. The protein localises to the nematocyst. Functionally, binds specifically to voltage-gated sodium channels (Nav), thereby delaying their inactivation during signal transduction. Causes death to crabs. This is Delta-actitoxin-Aeq2b 3 from Actinia equina (Beadlet anemone).